Consider the following 1397-residue polypeptide: Ankyrin repeat domain-containing protein 30A (1397 aa).

ANK repeat units follow at residues 72–101 (QKRT…QLDV), 105–134 (EHRT…DINL), 138–167 (YGNT…VIEV), 171–200 (ASLT…NANA), 204–233 (YKCT…DVFA), and 237–271 (CGVT…HQNT). Residues 267–279 (NHQNTNPEGTSAG) are compositionally biased toward polar residues. Disordered stretches follow at residues 267 to 376 (NHQN…TWPA), 453 to 482 (PTKE…EYSC), 782 to 807 (QTLR…WDSE), and 902 to 931 (TLRA…LRET). 2 stretches are compositionally biased toward basic and acidic residues: residues 290-304 (RTPD…KTPD) and 312-326 (RTPD…KTPD). A compositionally biased stretch (polar residues) spans 455–467 (KESSTKASANDQR). 2 stretches are compositionally biased toward basic and acidic residues: residues 782 to 800 (QTLR…KDYE) and 913 to 931 (SKQK…LRET). 2 coiled-coil regions span residues 998–1188 (VLKK…KQDK) and 1282–1327 (EHAQ…FQLQ).

Mainly expressed in breast and testis. A very faint signal is detected in placenta. Also expressed in many breast cancer cells.

The polypeptide is Ankyrin repeat domain-containing protein 30A (ANKRD30A) (Homo sapiens (Human)).